A 50-amino-acid polypeptide reads, in one-letter code: U37-theraphotoxin-Cg1a (50 aa).

The signal sequence occupies residues 1-19 (MRVLLIIAGLALLSVVCYT).

The protein belongs to the neurotoxin 10 (Hwtx-1) family. 67 (Jztx-67) subfamily. As to expression, expressed by the venom gland.

The protein localises to the secreted. The protein is U37-theraphotoxin-Cg1a of Chilobrachys guangxiensis (Chinese earth tiger tarantula).